The chain runs to 207 residues: dITP/XTP pyrophosphatase (207 aa).

Residue 11 to 16 (TGNPGK) participates in substrate binding. The active-site Proton acceptor is aspartate 72. Position 72 (aspartate 72) interacts with Mg(2+). Residues serine 73, 154–157 (FGYD), lysine 177, and 182–183 (HR) each bind substrate.

This sequence belongs to the HAM1 NTPase family. As to quaternary structure, homodimer. Mg(2+) is required as a cofactor.

It catalyses the reaction XTP + H2O = XMP + diphosphate + H(+). It carries out the reaction dITP + H2O = dIMP + diphosphate + H(+). The catalysed reaction is ITP + H2O = IMP + diphosphate + H(+). Its function is as follows. Pyrophosphatase that catalyzes the hydrolysis of nucleoside triphosphates to their monophosphate derivatives, with a high preference for the non-canonical purine nucleotides XTP (xanthosine triphosphate), dITP (deoxyinosine triphosphate) and ITP. Seems to function as a house-cleaning enzyme that removes non-canonical purine nucleotides from the nucleotide pool, thus preventing their incorporation into DNA/RNA and avoiding chromosomal lesions. The chain is dITP/XTP pyrophosphatase from Thermus thermophilus (strain ATCC BAA-163 / DSM 7039 / HB27).